Reading from the N-terminus, the 537-residue chain is Lysine--tRNA ligase (537 aa).

The 'HIGH' region motif lies at 30–38; that stretch reads PSGNIHIGN. Positions 276–280 match the 'KMSKS' region motif; it reads AMSSS.

This sequence belongs to the class-I aminoacyl-tRNA synthetase family.

It is found in the cytoplasm. The catalysed reaction is tRNA(Lys) + L-lysine + ATP = L-lysyl-tRNA(Lys) + AMP + diphosphate. This Methanosarcina barkeri protein is Lysine--tRNA ligase.